A 154-amino-acid chain; its full sequence is Lymphocyte antigen 6K (154 aa).

The signal sequence occupies residues 1–20 (MAFLVALLVVLGLQLVQSNA). Positions 21 to 117 (LTCHVCEAQN…NGEGPPTDQL (97 aa)) constitute a UPAR/Ly6 domain. A lipid anchor (GPI-anchor amidated glycine) is attached at glycine 123. A propeptide spans 124–154 (KASGRRHRYIELLLTGFMVLTANGLSALCLL) (removed in mature form).

Interacts with ADAM3 and TEX101. In terms of tissue distribution, strongly expressed in testes and weakly expressed in the epididymis, ovary, and uterus. Expressed in testicular germ cells (TGCs). Expressed in the testicular seminiferous tubules, in spermatocytes, spermatids, and testicular spermatozoa.

It is found in the secreted. The protein resides in the cytoplasm. The protein localises to the cell membrane. It localises to the cytoplasmic vesicle. Its subcellular location is the secretory vesicle. It is found in the acrosome. The protein resides in the membrane raft. Required for sperm migration into the oviduct and male fertility by controlling binding of sperm to zona pellucida. May play a role in cell growth. This is Lymphocyte antigen 6K from Mus musculus (Mouse).